Reading from the N-terminus, the 2432-residue chain is uncharacterized protein (2432 aa).

Belongs to the IIV-6 261R/396L/443R family.

This is an uncharacterized protein from Invertebrate iridescent virus 6 (IIV-6).